The primary structure comprises 497 residues: Argininosuccinate lyase (497 aa).

The protein belongs to the lyase 1 family. Argininosuccinate lyase subfamily.

The protein localises to the cytoplasm. It carries out the reaction 2-(N(omega)-L-arginino)succinate = fumarate + L-arginine. It functions in the pathway amino-acid biosynthesis; L-arginine biosynthesis; L-arginine from L-ornithine and carbamoyl phosphate: step 3/3. This chain is Argininosuccinate lyase, found in Clavibacter michiganensis subsp. michiganensis (strain NCPPB 382).